The chain runs to 400 residues: Argininosuccinate synthase (400 aa).

8 to 16 serves as a coordination point for ATP; the sequence is AYSGGLDTS. Tyr-87 is a binding site for L-citrulline. ATP is bound at residue Gly-117. Residues Thr-119, Asn-123, and Asp-124 each contribute to the L-aspartate site. Position 123 (Asn-123) interacts with L-citrulline. The L-citrulline site is built by Arg-127, Ser-175, Glu-260, and Tyr-272.

This sequence belongs to the argininosuccinate synthase family. Type 1 subfamily. In terms of assembly, homotetramer.

It is found in the cytoplasm. It carries out the reaction L-citrulline + L-aspartate + ATP = 2-(N(omega)-L-arginino)succinate + AMP + diphosphate + H(+). It participates in amino-acid biosynthesis; L-arginine biosynthesis; L-arginine from L-ornithine and carbamoyl phosphate: step 2/3. In Mycobacterium sp. (strain KMS), this protein is Argininosuccinate synthase.